A 266-amino-acid chain; its full sequence is MDFVAKNLTKLRETNPLVQNITNYVVMNSTANSLLALGASPVMAHAMDELEEMVSIASALVVNIGTLDEYWIPSMEKAAKIASDLKKPIILDPVGAGATKLRTKTALKILDFADISVLRGNFGEIAAVLGEHGKTRGVDSAAYDSNEAIELSKNAAKEFNTVSAVTGPVDYVSNGKEIYAISNGHPMLSKVTGTGCASTSIIGAFSAVDEPLKAAVSGLTVYGISAEMAFSEAPYPGTFQAKVYDWLYRIDEKLVFEKAKVNKFEI.

Met43 contributes to the substrate binding site. ATP contacts are provided by Arg119 and Thr166. A substrate-binding site is contributed by Gly193.

The protein belongs to the Thz kinase family. Mg(2+) is required as a cofactor.

It carries out the reaction 5-(2-hydroxyethyl)-4-methylthiazole + ATP = 4-methyl-5-(2-phosphooxyethyl)-thiazole + ADP + H(+). It functions in the pathway cofactor biosynthesis; thiamine diphosphate biosynthesis; 4-methyl-5-(2-phosphoethyl)-thiazole from 5-(2-hydroxyethyl)-4-methylthiazole: step 1/1. Catalyzes the phosphorylation of the hydroxyl group of 4-methyl-5-beta-hydroxyethylthiazole (THZ). The sequence is that of Hydroxyethylthiazole kinase from Methanococcus maripaludis (strain C5 / ATCC BAA-1333).